Consider the following 564-residue polypeptide: Formate--tetrahydrofolate ligase (564 aa).

Residue 69–76 (TPAGEGKS) participates in ATP binding.

Belongs to the formate--tetrahydrofolate ligase family.

It carries out the reaction (6S)-5,6,7,8-tetrahydrofolate + formate + ATP = (6R)-10-formyltetrahydrofolate + ADP + phosphate. It participates in one-carbon metabolism; tetrahydrofolate interconversion. The protein is Formate--tetrahydrofolate ligase of Renibacterium salmoninarum (strain ATCC 33209 / DSM 20767 / JCM 11484 / NBRC 15589 / NCIMB 2235).